The chain runs to 92 residues: Small ribosomal subunit protein uS19c (92 aa).

It belongs to the universal ribosomal protein uS19 family.

The protein resides in the plastid. It localises to the chloroplast. Its function is as follows. Protein S19 forms a complex with S13 that binds strongly to the 16S ribosomal RNA. This chain is Small ribosomal subunit protein uS19c (rps19), found in Porphyra purpurea (Red seaweed).